We begin with the raw amino-acid sequence, 201 residues long: Small ribosomal subunit protein uS4c (201 aa).

A disordered region spans residues 15–43 (LGALPGLTSKRPSPGSDLRNQSRSGKRSQ). Positions 89 to 150 (MRLDNILFRL…EQRSRALIQK (62 aa)) constitute an S4 RNA-binding domain.

This sequence belongs to the universal ribosomal protein uS4 family. Part of the 30S ribosomal subunit. Contacts protein S5. The interaction surface between S4 and S5 is involved in control of translational fidelity.

It is found in the plastid. It localises to the chloroplast. Functionally, one of the primary rRNA binding proteins, it binds directly to 16S rRNA where it nucleates assembly of the body of the 30S subunit. In terms of biological role, with S5 and S12 plays an important role in translational accuracy. This chain is Small ribosomal subunit protein uS4c (rps4), found in Ceratophyllum demersum (Rigid hornwort).